The following is a 159-amino-acid chain: MKVKLITVGKLKEKYLKDGIAEYCKRLKRFTKFELEELPDEKIPNNASQAQNTYILEKEGQRILNKISNREFVIVLAIEGKQFSSEKFSQLLSATMLKGYSDLTFVIGGSLGLSQEVKKRASILMSFGLLTLPHQLMRLVFVEQIYRAFMIQEGSPYHK.

S-adenosyl-L-methionine-binding positions include leucine 76, glycine 108, and 127–132; that span reads FGLLTL.

The protein belongs to the RNA methyltransferase RlmH family. Homodimer.

Its subcellular location is the cytoplasm. It catalyses the reaction pseudouridine(1915) in 23S rRNA + S-adenosyl-L-methionine = N(3)-methylpseudouridine(1915) in 23S rRNA + S-adenosyl-L-homocysteine + H(+). Functionally, specifically methylates the pseudouridine at position 1915 (m3Psi1915) in 23S rRNA. The chain is Ribosomal RNA large subunit methyltransferase H from Streptococcus mutans serotype c (strain ATCC 700610 / UA159).